Consider the following 258-residue polypeptide: UPF0758 protein BamMC406_2419 (258 aa).

The segment at 13-42 (CRDPADAPAAPARHTGPARPRKRRPRNWKP) is disordered. Basic residues predominate over residues 31–42 (RPRKRRPRNWKP). Positions 136 to 258 (QIDSPGAVED…TFSFARAGWL (123 aa)) constitute an MPN domain. His207, His209, and Asp220 together coordinate Zn(2+). The JAMM motif motif lies at 207-220 (HNHPSGAVQPSAED).

Belongs to the UPF0758 family.

This Burkholderia ambifaria (strain MC40-6) protein is UPF0758 protein BamMC406_2419.